Consider the following 1028-residue polypeptide: Antigenic heat-stable 120 kDa protein (1028 aa).

Polar residues-rich tracts occupy residues 359–384 (GQSK…QYKQ) and 391–400 (PTNQPLQPET). The segment at 359 to 405 (GQSKEQPLITPQQTTSSSVEPPQYKQQVPPITPTNQPLQPETSQMQQ) is disordered.

The protein resides in the cytoplasm. This is Antigenic heat-stable 120 kDa protein (sca4) from Rickettsia africae.